The primary structure comprises 450 residues: MKVIDQFKNKKVLVLGLAKSGESAARLLDKLGAIVTVNDGKPFEDNPAAQCLLEEGIKVITGGHPLELLDEEFALMVKNPGIPYSNPMIEKALAKGIPVLTEVELAYLISEAPIIGITGSNGKTTTTTMIGEVLTAAGQHGLLSGNIGYPASQVAQIASDKDTLVMELSSFQLMGVQEFHPEIAVITNLMPTHIDYHGSFSEYVAAKWNIQNKMTAADFLVLNFNQDLAKDLTSKTEATVVPFSTLEKVDGAYLEDGQLYFRGEVVMAANEIGVPGSHNVENALATIAVAKLRDVDNQTIKETLSAFGGVKHRLQFVDDIKGVKFYNDSKSTNILATQKALSGFDNSKVVLIAGGLDRGNEFDELVPDITGLKKMVILGQSAERVKRAADKAGVAYVEATDIADATRKAYELATQGDVVLLSPANASWDMYANFEVRGDLFIDTVAELKE.

119–125 (GSNGKTT) is an ATP binding site.

The protein belongs to the MurCDEF family.

The protein resides in the cytoplasm. It carries out the reaction UDP-N-acetyl-alpha-D-muramoyl-L-alanine + D-glutamate + ATP = UDP-N-acetyl-alpha-D-muramoyl-L-alanyl-D-glutamate + ADP + phosphate + H(+). It functions in the pathway cell wall biogenesis; peptidoglycan biosynthesis. Functionally, cell wall formation. Catalyzes the addition of glutamate to the nucleotide precursor UDP-N-acetylmuramoyl-L-alanine (UMA). This is UDP-N-acetylmuramoylalanine--D-glutamate ligase from Streptococcus pneumoniae (strain ATCC 700669 / Spain 23F-1).